The primary structure comprises 385 residues: Bifunctional chorismate mutase/prephenate dehydratase (385 aa).

Residues 1–92 (MPANNSLLIF…ESVATQKKLL (92 aa)) enclose the Chorismate mutase domain. Positions 11, 28, 39, 48, 52, 84, and 88 each coordinate substrate. In terms of domain architecture, Prephenate dehydratase spans 105–285 (NFSFLGPKGS…NITRFILLNR (181 aa)). Residues 286–385 (NPKKISKNIP…PSEKITPIAP (100 aa)) form a regulatory region. Positions 299–376 (TLIFTTGQEA…RFIKILGCYP (78 aa)) constitute an ACT domain.

The protein localises to the cytoplasm. It carries out the reaction chorismate = prephenate. The catalysed reaction is prephenate + H(+) = 3-phenylpyruvate + CO2 + H2O. Its pathway is amino-acid biosynthesis; L-phenylalanine biosynthesis; phenylpyruvate from prephenate: step 1/1. It participates in metabolic intermediate biosynthesis; prephenate biosynthesis; prephenate from chorismate: step 1/1. Catalyzes the Claisen rearrangement of chorismate to prephenate and the decarboxylation/dehydration of prephenate to phenylpyruvate. This Buchnera aphidicola subsp. Acyrthosiphon pisum (strain APS) (Acyrthosiphon pisum symbiotic bacterium) protein is Bifunctional chorismate mutase/prephenate dehydratase (pheA).